The primary structure comprises 907 residues: Clathrin coat assembly protein AP180 (907 aa).

The ENTH domain maps to 14–145 (QYSVTGSAVA…FSYRQMAFDF (132 aa)). Disordered stretches follow at residues 285–326 (LEGK…DTSP), 342–380 (TSKP…TAWG), 393–414 (SVPS…PTTT), and 505–525 (VPVV…APSP). A phosphoserine mark is found at S296, S300, and S306. Over residues 302–324 (LSKSSPATTVTSPNSTPAKTIDT) the composition is skewed to polar residues. The O-linked (GlcNAc) threonine glycan is linked to T310. S313 is subject to Phosphoserine. T317 is modified (phosphothreonine). The span at 505–515 (VPVVTPTASTA) shows a compositional bias: low complexity. The segment covering 516–525 (PPVPATAPSP) has biased composition (pro residues). Phosphoserine occurs at positions 596, 602, 623, 629, and 763. An Asymmetric dimethylarginine; alternate modification is found at R865. An Omega-N-methylarginine; alternate modification is found at R865. Residues 867–907 (PFGAAAVPGTQLSPSPTPASQSPKKPPAKDPLADLNIKDFL) are disordered. A compositionally biased stretch (basic and acidic residues) spans 893 to 907 (PAKDPLADLNIKDFL).

Belongs to the PICALM/SNAP91 family. Binds AP2A2. Interacts with AP2B1; clathrin competes with SNAP91. Thr-310 can be modified by the addition of N-acetylglucosamine which can be further phosphorylated. There is no evidence for direct Thr-310 phosphorylation.

The protein resides in the cell membrane. The protein localises to the membrane. It is found in the coated pit. Its function is as follows. Adaptins are components of the adapter complexes which link clathrin to receptors in coated vesicles. Clathrin-associated protein complexes are believed to interact with the cytoplasmic tails of membrane proteins, leading to their selection and concentration. Binding of AP180 to clathrin triskelia induces their assembly into 60-70 nm coats. This is Clathrin coat assembly protein AP180 (SNAP91) from Homo sapiens (Human).